The sequence spans 351 residues: Putative [LysW]-L-2-aminoadipate/[LysW]-L-glutamate phosphate reductase (351 aa).

NADP(+) is bound by residues 10 to 13 (SGFT) and 34 to 36 (SRK). Cysteine 151 is a catalytic residue. Asparagine 318 is an NADP(+) binding site.

It belongs to the NAGSA dehydrogenase family. Type 1 subfamily. LysY sub-subfamily.

The protein resides in the cytoplasm. The enzyme catalyses [amino-group carrier protein]-C-terminal-N-(1-carboxy-5-oxopentan-1-yl)-L-glutamine + phosphate + NADP(+) = [amino-group carrier protein]-C-terminal-N-(1-carboxy-5-phosphooxy-5-oxopentan-1-yl)-L-glutamine + NADPH + H(+). The catalysed reaction is [amino-group carrier protein]-C-terminal-gamma-(L-glutamyl-5-semialdehyde)-L-glutamate + phosphate + NADP(+) = [amino-group carrier protein]-C-terminal-gamma-(5-phospho-L-glutamyl)-L-glutamate + NADPH + H(+). The protein operates within amino-acid biosynthesis; L-lysine biosynthesis via AAA pathway; L-lysine from L-alpha-aminoadipate (Thermus route): step 3/5. Its pathway is amino-acid biosynthesis; L-arginine biosynthesis. In terms of biological role, involved in both the arginine and lysine biosynthetic pathways. The polypeptide is Putative [LysW]-L-2-aminoadipate/[LysW]-L-glutamate phosphate reductase (Pyrobaculum calidifontis (strain DSM 21063 / JCM 11548 / VA1)).